Reading from the N-terminus, the 294-residue chain is Cell division protein ZipA (294 aa).

Residue Met-1 is a topological domain, periplasmic. Residues 2–22 (EIGLREWLILIGIIVIAGILF) form a helical membrane-spanning segment. The Cytoplasmic segment spans residues 23–294 (DGWRRMRGGK…FERRALTQKR (272 aa)). Residues 47–107 (PDEEGSAEVL…GKRAAEMQPQ (61 aa)) form a disordered region. Residues 82–91 (AREREREQKP) show a composition bias toward basic and acidic residues.

Belongs to the ZipA family. As to quaternary structure, interacts with FtsZ via their C-terminal domains.

The protein localises to the cell inner membrane. Essential cell division protein that stabilizes the FtsZ protofilaments by cross-linking them and that serves as a cytoplasmic membrane anchor for the Z ring. Also required for the recruitment to the septal ring of downstream cell division proteins. The chain is Cell division protein ZipA from Pseudomonas putida (strain W619).